The following is a 451-amino-acid chain: UDP-glycosyltransferase 13 (451 aa).

The active-site Proton acceptor is histidine 15. Histidine 15 is an an anthocyanidin binding site. Aspartate 93 functions as the Charge relay in the catalytic mechanism. UDP-alpha-D-glucose is bound by residues alanine 326, glutamine 328, histidine 343, tryptophan 346, asparagine 347, serine 348, and glutamate 351. Alanine 366 contributes to the an anthocyanidin binding site. UDP-alpha-D-glucose contacts are provided by glutamate 367 and glutamine 368.

This sequence belongs to the UDP-glycosyltransferase family. Expressed in roots. Detected in stems and leaves.

The catalysed reaction is a 7-hydroxyisoflavone + UDP-alpha-D-glucose = a 7-hydroxyisoflavone 7-O-beta-D-glucoside + UDP + H(+). In terms of biological role, isoflavone 7-O-glucosyltransferase converting daidzein to daidzin, genistein to genistin and formononetin to ononin. Shows some activity toward the flavanones liquiritigenin and naringenin, but not toward cyanidin, isoliquiritigenin, apigenin, luteolin, kaempferol, quercetin, daidzin and puerarin. This chain is UDP-glycosyltransferase 13, found in Pueraria montana var. lobata (Kudzu vine).